A 366-amino-acid chain; its full sequence is tRNA/tmRNA (uracil-C(5))-methyltransferase (366 aa).

S-adenosyl-L-methionine is bound by residues Gln-190, Tyr-218, Asn-223, Glu-239, and Asp-299. Catalysis depends on Cys-324, which acts as the Nucleophile. Residue Glu-358 is the Proton acceptor of the active site.

This sequence belongs to the class I-like SAM-binding methyltransferase superfamily. RNA M5U methyltransferase family. TrmA subfamily.

It catalyses the reaction uridine(54) in tRNA + S-adenosyl-L-methionine = 5-methyluridine(54) in tRNA + S-adenosyl-L-homocysteine + H(+). The enzyme catalyses uridine(341) in tmRNA + S-adenosyl-L-methionine = 5-methyluridine(341) in tmRNA + S-adenosyl-L-homocysteine + H(+). Functionally, dual-specificity methyltransferase that catalyzes the formation of 5-methyluridine at position 54 (m5U54) in all tRNAs, and that of position 341 (m5U341) in tmRNA (transfer-mRNA). This Salmonella arizonae (strain ATCC BAA-731 / CDC346-86 / RSK2980) protein is tRNA/tmRNA (uracil-C(5))-methyltransferase.